A 102-amino-acid chain; its full sequence is Small ribosomal subunit protein uS10 (102 aa).

Belongs to the universal ribosomal protein uS10 family. Part of the 30S ribosomal subunit.

Involved in the binding of tRNA to the ribosomes. This Clostridium acetobutylicum (strain ATCC 824 / DSM 792 / JCM 1419 / IAM 19013 / LMG 5710 / NBRC 13948 / NRRL B-527 / VKM B-1787 / 2291 / W) protein is Small ribosomal subunit protein uS10.